A 539-amino-acid polypeptide reads, in one-letter code: T-complex protein 1 subunit zeta (539 aa).

This sequence belongs to the TCP-1 chaperonin family. As to quaternary structure, heterooligomeric complex of about 850 to 900 kDa that forms two stacked rings, 12 to 16 nm in diameter.

Its subcellular location is the cytoplasm. Its function is as follows. Molecular chaperone; assists the folding of proteins upon ATP hydrolysis. Known to play a role, in vitro, in the folding of actin and tubulin. This chain is T-complex protein 1 subunit zeta (cct-6), found in Caenorhabditis elegans.